A 390-amino-acid chain; its full sequence is MKFVDEASILVVAGDGGNGCVSFRREKYIPKGGPDGGDGGDGGDVWMEADENLNTLIDYRFEKSFRAERGQNGASRDCTGKRGKDVTIKVPVGTRVIDQGTGETMGDMTKHGQRLLVAKGGWHGLGNTRFKSSVNRTPRQKTNGTPGDKRDLLLELMLLADVGMLGMPNAGKSTFIRAVSAAKPKVADYPFTTLVPSLGVVRMDSEKSFVVADIPGLIEGAAEGAGLGIRFLKHLERCRVLLHLIDIDPIDGSDPVENARIIIGELEKYSQDLAAKPRWLVFNKIDLMDKTEAEEKAKAIAEALGWEGKYYLISAASQLGVKDLCWDVMTFIIENPIAQAEEAKQPEKVEFMWDDYHRQQLVEVEEDADDDWDDDWDEDDEEGVEFIYKR.

The Obg domain maps to 1–159; that stretch reads MKFVDEASIL…RDLLLELMLL (159 aa). The disordered stretch occupies residues 127–147; sequence NTRFKSSVNRTPRQKTNGTPG. The span at 129–145 shows a compositional bias: polar residues; that stretch reads RFKSSVNRTPRQKTNGT. An OBG-type G domain is found at 160–333; it reads ADVGMLGMPN…LCWDVMTFII (174 aa). Residues 166-173, 191-195, 213-216, 283-286, and 314-316 each bind GTP; these read GMPNAGKS, FTTLV, DIPG, NKID, and SAA. Mg(2+)-binding residues include S173 and T193.

Belongs to the TRAFAC class OBG-HflX-like GTPase superfamily. OBG GTPase family. Monomer. The cofactor is Mg(2+).

The protein localises to the cytoplasm. In terms of biological role, an essential GTPase which binds GTP, GDP and possibly (p)ppGpp with moderate affinity, with high nucleotide exchange rates and a fairly low GTP hydrolysis rate. Plays a role in control of the cell cycle, stress response, ribosome biogenesis and in those bacteria that undergo differentiation, in morphogenesis control. The protein is GTPase Obg of Salmonella gallinarum (strain 287/91 / NCTC 13346).